Consider the following 721-residue polypeptide: Cytosolic carboxypeptidase 2 (721 aa).

Residues 43–71 (TASDMINSSSPSESSDSNLEEEQEESKPC) form a disordered region. Residues 50–59 (SSSPSESSDS) show a composition bias toward low complexity. The Peptidase M14 domain maps to 334–605 (YPYTYSKLQH…CFCDTLLDFC (272 aa)). Positions 400, 403, and 496 each coordinate Zn(2+). Glu-569 serves as the catalytic Proton donor/acceptor. The interval 645 to 721 (DIESSTSGSN…TQHGDTEDQS (77 aa)) is disordered. A compositionally biased stretch (low complexity) spans 647–660 (ESSTSGSNSTESDG). The span at 672–688 (GKKKLLRSRKERNRLRQ) shows a compositional bias: basic residues. The segment covering 703–714 (YSCQTLNATTQH) has biased composition (polar residues).

Belongs to the peptidase M14 family. The cofactor is Zn(2+).

It is found in the cytoplasm. It localises to the cytosol. Its subcellular location is the cytoskeleton. The protein localises to the microtubule organizing center. The protein resides in the centrosome. It is found in the centriole. It localises to the cilium basal body. It carries out the reaction (L-glutamyl)(n+1)-gamma-L-glutamyl-L-glutamyl-[protein] + H2O = (L-glutamyl)(n)-gamma-L-glutamyl-L-glutamyl-[protein] + L-glutamate. Its function is as follows. Metallocarboxypeptidase that mediates deglutamylation of target proteins. Catalyzes the deglutamylation of polyglutamate side chains generated by post-translational polyglutamylation in proteins such as tubulins. Also removes gene-encoded polyglutamates from the carboxy-terminus of target proteins such as MYLK. Does not show detyrosinase or deglycylase activities from the carboxy-terminus of tubulin. Functionally, metallocarboxypeptidase that mediates deglutamylation of tubulin and non-tubulin target proteins. Catalyzes the removal of polyglutamate side chains present on the gamma-carboxyl group of glutamate residues within the C-terminal tail of tubulin protein. Specifically cleaves tubulin long-side-chains, while it is not able to remove the branching point glutamate. Also catalyzes the removal of polyglutamate residues from the carboxy-terminus of non-tubulin proteins. This Danio rerio (Zebrafish) protein is Cytosolic carboxypeptidase 2 (zte25).